The primary structure comprises 136 residues: uncharacterized protein (136 aa).

It is found in the mitochondrion. This is an uncharacterized protein from Arabidopsis thaliana (Mouse-ear cress).